We begin with the raw amino-acid sequence, 484 residues long: UBX domain-containing protein 11 (484 aa).

The segment at 1–28 (MSSPLASLSKTRKVPLESESVNPGRRGI) is disordered. Residues 69-147 (HDSELMASMT…IGEMERFLSD (79 aa)) are a coiled coil. The SEP domain maps to 227–291 (LEPIPLKVYR…VSDLRNQIYP (65 aa)). Positions 389–466 (PMPLLSMLRI…GLVPNATLLL (78 aa)) constitute a UBX domain. Phosphoserine is present on residues serine 478 and serine 482.

In terms of assembly, interacts with GNA12, GNA13, RND1, RND2 and RND3.

Its subcellular location is the cytoplasm. The protein localises to the cytoskeleton. Its function is as follows. May be involved in the reorganization of actin cytoskeleton mediated by RND1, RND2 and RND3. Promotes RHOA activation mediated by GNA12 and GNA13. The sequence is that of UBX domain-containing protein 11 (Ubxn11) from Mus musculus (Mouse).